A 320-amino-acid chain; its full sequence is Foldase protein PrsA (320 aa).

A signal peptide spans 1–20 (MKMINKLIVPVTASALLLGA). The N-palmitoyl cysteine moiety is linked to residue Cys21. Cys21 is lipidated: S-diacylglycerol cysteine. Residues 139-245 (EDSKKASHIL…FGYHIIKADK (107 aa)) enclose the PpiC domain. Residues 159 to 198 (EGLDDKEAKQKAEEIQKEVSKDPSKFGEIAKKESMDTGSA) are disordered.

Belongs to the PrsA family.

The protein resides in the cell membrane. It carries out the reaction [protein]-peptidylproline (omega=180) = [protein]-peptidylproline (omega=0). Functionally, plays a major role in protein secretion by helping the post-translocational extracellular folding of several secreted proteins. This Staphylococcus aureus (strain MRSA252) protein is Foldase protein PrsA.